The chain runs to 79 residues: uncharacterized protein (79 aa).

This is an uncharacterized protein from Sulfolobus spindle-shape virus 1 (SSV1).